The primary structure comprises 209 residues: Uracil phosphoribosyltransferase (209 aa).

5-phospho-alpha-D-ribose 1-diphosphate is bound by residues R79, R104, and 131-139 (DPMLATGGS). Uracil-binding positions include I194 and 199 to 201 (GDA). D200 lines the 5-phospho-alpha-D-ribose 1-diphosphate pocket.

Belongs to the UPRTase family. Mg(2+) is required as a cofactor.

The catalysed reaction is UMP + diphosphate = 5-phospho-alpha-D-ribose 1-diphosphate + uracil. It functions in the pathway pyrimidine metabolism; UMP biosynthesis via salvage pathway; UMP from uracil: step 1/1. With respect to regulation, allosterically activated by GTP. In terms of biological role, catalyzes the conversion of uracil and 5-phospho-alpha-D-ribose 1-diphosphate (PRPP) to UMP and diphosphate. The chain is Uracil phosphoribosyltransferase from Lactiplantibacillus plantarum (strain ATCC BAA-793 / NCIMB 8826 / WCFS1) (Lactobacillus plantarum).